Here is a 382-residue protein sequence, read N- to C-terminus: Serine protease 23 (382 aa).

A signal peptide spans 1–22; the sequence is MAGIPGLFILLVLLCVFMQVSP. The N-linked (GlcNAc...) asparagine glycan is linked to asparagine 92. A disulfide bridge links cysteine 159 with cysteine 175. The Charge relay system role is filled by histidine 174. A glycan (N-linked (GlcNAc...) asparagine) is linked at asparagine 206. Catalysis depends on charge relay system residues aspartate 239 and serine 315.

The protein belongs to the peptidase S1 family.

It is found in the secreted. In Mus musculus (Mouse), this protein is Serine protease 23 (Prss23).